The chain runs to 151 residues: 3-hydroxyacyl-[acyl-carrier-protein] dehydratase FabZ (151 aa).

The active site involves histidine 54.

This sequence belongs to the thioester dehydratase family. FabZ subfamily.

The protein resides in the cytoplasm. The catalysed reaction is a (3R)-hydroxyacyl-[ACP] = a (2E)-enoyl-[ACP] + H2O. Its function is as follows. Involved in unsaturated fatty acids biosynthesis. Catalyzes the dehydration of short chain beta-hydroxyacyl-ACPs and long chain saturated and unsaturated beta-hydroxyacyl-ACPs. The polypeptide is 3-hydroxyacyl-[acyl-carrier-protein] dehydratase FabZ (Blochmanniella pennsylvanica (strain BPEN)).